The primary structure comprises 57 residues: Large ribosomal subunit protein bL32 (57 aa).

It belongs to the bacterial ribosomal protein bL32 family.

This chain is Large ribosomal subunit protein bL32, found in Staphylococcus saprophyticus subsp. saprophyticus (strain ATCC 15305 / DSM 20229 / NCIMB 8711 / NCTC 7292 / S-41).